The sequence spans 832 residues: Armadillo segment polarity protein (832 aa).

Polar residues predominate over residues 1–20; it reads MSYQMPQNRTMSHNPYNSSD. The tract at residues 1–24 is disordered; that stretch reads MSYQMPQNRTMSHNPYNSSDMPMP. ARM repeat units lie at residues 146–185, 188–228, 230–269, 272–311, 356–395, 397–434, 483–524, 594–634, and 636–675; these read NYQDDADLATRAIPELIKLLNDEDQVVVSQAAMMVHQLSK, ASRH…NLSH, RQGLLAIFKSGGIPALVKLLSSPVESVLFYAITTLHNLLL, DGSKMAVRLAGGLQKMVALLQRNNVKFLAIVTDCLQILAY, SSNKPAIVEAGGMQALAMHLGNPSQRLVQNCLWTLRNLSD, ATKVDGLETLLSGLVTVLGSSDVNVVTCAAGILSNLTC, SESA…NLAL, ELNR…ELAV, and KEVAEMIEAEGATAPLTELLNSANEGVATYAAAVLFKMSE. Positions 721–832 are disordered; that stretch reads AYEGLYGQGP…QVAAWYDTDL (112 aa). Positions 767–777 are enriched in low complexity; sequence PAGSNPNAGNN.

Belongs to the beta-catenin family.

The protein resides in the cytoplasm. It is found in the cell membrane. The protein localises to the cell junction. It localises to the adherens junction. Its function is as follows. May associate with CadN and participate in the transmission of developmental information. Can associate with alpha-catenin. Accumulates through wg signaling; arm function in wg signal transduction is required early in development for determination of neuroblast fate. Arm and Abl proteins function cooperatively at adherens junctions in both the CNS and epidermis. The protein is Armadillo segment polarity protein of Aedes aegypti (Yellowfever mosquito).